Reading from the N-terminus, the 255-residue chain is MSAFTIIIPARYGSSRLPGKPLLDIAGKPMIAHVYDRARESLAKRIYVATDDARIAEAVEGFGGSVLMTRADHPSGTDRLAECADTLELDDDEIVVNVQGDEPMLPAELISQVANNLAANPQAGIATLCERIHDRETLFNPNAVKVVKNEAGMALYFSRAPIPWARDYFADADAGLPPTYDFYRHIGIYAYRVGFLRDYVTWGSCPLEGIESLEQLRAMWRGVPIHVDVAAKAPPAGVDTEADLQRVRAVMAKSS.

The protein belongs to the KdsB family.

It localises to the cytoplasm. The catalysed reaction is 3-deoxy-alpha-D-manno-oct-2-ulosonate + CTP = CMP-3-deoxy-beta-D-manno-octulosonate + diphosphate. It functions in the pathway nucleotide-sugar biosynthesis; CMP-3-deoxy-D-manno-octulosonate biosynthesis; CMP-3-deoxy-D-manno-octulosonate from 3-deoxy-D-manno-octulosonate and CTP: step 1/1. It participates in bacterial outer membrane biogenesis; lipopolysaccharide biosynthesis. Functionally, activates KDO (a required 8-carbon sugar) for incorporation into bacterial lipopolysaccharide in Gram-negative bacteria. The polypeptide is 3-deoxy-manno-octulosonate cytidylyltransferase (Hahella chejuensis (strain KCTC 2396)).